The following is a 766-amino-acid chain: Serine/threonine-protein kinase DCLK2 (766 aa).

The interval 1–45 (MASTRSIELEHFEERDKRPRPGSRRGAPSSSGGSSSSGPKGNGLI) is disordered. Over residues 7–19 (IELEHFEERDKRP) the composition is skewed to basic and acidic residues. A compositionally biased stretch (low complexity) spans 24-39 (RRGAPSSSGGSSSSGP). Phosphothreonine is present on Thr61. 2 consecutive Doublecortin domains span residues 72–158 (KKAR…VDYT) and 197–280 (KLVT…AQDD). Composition is skewed to low complexity over residues 300 to 312 (AVKY…PGPS) and 324 to 347 (TPSS…SPGS). The disordered stretch occupies residues 300–378 (AVKYSGSKSP…ELDRCISPEG (79 aa)). A Phosphoserine modification is found at Ser362. The 258-residue stretch at 394-651 (YKIGKVIGDG…AGQILSHPWV (258 aa)) folds into the Protein kinase domain. ATP contacts are provided by residues 400–408 (IGDGNFAVV) and Lys423. Residue Asp515 is the Proton acceptor of the active site. A Phosphoserine modification is found at Ser647. Phosphothreonine is present on Thr666. The disordered stretch occupies residues 707 to 766 (CQDSGRPGMEPISPVPPSVEEIPVPGEAVPAPTPPESPTPHPPPAAPGGERAGTWRRHRD). Low complexity predominate over residues 724–736 (SVEEIPVPGEAVP). Residues 737-752 (APTPPESPTPHPPPAA) show a composition bias toward pro residues.

It belongs to the protein kinase superfamily. CAMK Ser/Thr protein kinase family. CaMK subfamily. In terms of assembly, binds to and stabilizes microtubules. Interacts with MAPK8IP1/JIP-1, MAPK8IP2/JIP-2, MAPK9/JNK2, PPP1R9B/NEURABIN-2 and actin. In terms of processing, autophosphorylated. In terms of tissue distribution, expressed in the brain, heart and eyes.

The protein localises to the cytoplasm. Its subcellular location is the cytoskeleton. It catalyses the reaction L-seryl-[protein] + ATP = O-phospho-L-seryl-[protein] + ADP + H(+). It carries out the reaction L-threonyl-[protein] + ATP = O-phospho-L-threonyl-[protein] + ADP + H(+). Functionally, protein kinase with a significantly reduced C(a2+)/CAM affinity and dependence compared to other members of the CaMK family. May play a role in the down-regulation of CRE-dependent gene activation probably by phosphorylation of the CREB coactivator CRTC2/TORC2 and the resulting retention of TORC2 in the cytoplasm. In Homo sapiens (Human), this protein is Serine/threonine-protein kinase DCLK2 (DCLK2).